We begin with the raw amino-acid sequence, 104 residues long: L-rhamnose mutarotase (104 aa).

Y18 contacts substrate. The active-site Proton donor is the H22. Residues Y41 and 76–77 (WW) each bind substrate.

It belongs to the rhamnose mutarotase family. As to quaternary structure, homodimer.

The protein resides in the cytoplasm. The catalysed reaction is alpha-L-rhamnose = beta-L-rhamnose. It participates in carbohydrate metabolism; L-rhamnose metabolism. Involved in the anomeric conversion of L-rhamnose. This Escherichia coli O17:K52:H18 (strain UMN026 / ExPEC) protein is L-rhamnose mutarotase.